A 285-amino-acid chain; its full sequence is MCCPNYNSARALAQFLTERGLRMHKKWGQNFLLDPVLRTQLVKILAPERGERVWEIGAGIGAMTALLVQNSDFLTVFEIDRGFVQTLRKLFDAHVRVIEGDVLQQWHAAAAQEQPACVLGNLPYNIAARFIGNTIESGYIFKRMVVTVQKEIGLRMTALPAQKWYSYFSVLCQWQYEVRVIRNVAPVCFWPRPHVVSQALVLTKRNAVPSCVDPALFLHVTKTLFSARRKTVRNNLLTWQKRMPGGAAVCVEELCARAGIDARARAEQLSIYDFITLSDTLRALL.

Residues asparagine 30, leucine 32, glycine 57, glutamate 78, aspartate 101, and asparagine 121 each coordinate S-adenosyl-L-methionine.

It belongs to the class I-like SAM-binding methyltransferase superfamily. rRNA adenine N(6)-methyltransferase family. RsmA subfamily.

It is found in the cytoplasm. The enzyme catalyses adenosine(1518)/adenosine(1519) in 16S rRNA + 4 S-adenosyl-L-methionine = N(6)-dimethyladenosine(1518)/N(6)-dimethyladenosine(1519) in 16S rRNA + 4 S-adenosyl-L-homocysteine + 4 H(+). In terms of biological role, specifically dimethylates two adjacent adenosines (A1518 and A1519) in the loop of a conserved hairpin near the 3'-end of 16S rRNA in the 30S particle. May play a critical role in biogenesis of 30S subunits. This is Ribosomal RNA small subunit methyltransferase A from Treponema pallidum (strain Nichols).